Consider the following 83-residue polypeptide: Cytochrome b559 subunit alpha (83 aa).

The helical transmembrane segment at 21-35 threads the bilayer; it reads VIHSITIPSLFIAGW. H23 is a heme binding site.

The protein belongs to the PsbE/PsbF family. As to quaternary structure, heterodimer of an alpha subunit and a beta subunit. PSII is composed of 1 copy each of membrane proteins PsbA, PsbB, PsbC, PsbD, PsbE, PsbF, PsbH, PsbI, PsbJ, PsbK, PsbL, PsbM, PsbT, PsbX, PsbY, PsbZ, Psb30/Ycf12, at least 3 peripheral proteins of the oxygen-evolving complex and a large number of cofactors. It forms dimeric complexes. The cofactor is heme b.

The protein resides in the plastid. It is found in the chloroplast thylakoid membrane. Its function is as follows. This b-type cytochrome is tightly associated with the reaction center of photosystem II (PSII). PSII is a light-driven water:plastoquinone oxidoreductase that uses light energy to abstract electrons from H(2)O, generating O(2) and a proton gradient subsequently used for ATP formation. It consists of a core antenna complex that captures photons, and an electron transfer chain that converts photonic excitation into a charge separation. The sequence is that of Cytochrome b559 subunit alpha from Pinus koraiensis (Korean pine).